A 1381-amino-acid polypeptide reads, in one-letter code: Non-structural polyprotein 1AB (1381 aa).

Positions 121–160 form a coiled coil; that stretch reads VLVQEHKKLDSDLKESRRELSQLKLEHSLLRHDYERLVRE. The next 5 helical transmembrane spans lie at 169–189, 249–269, 279–299, 324–344, and 365–385; these read FKFSAVIFYAFFLGFLLMSAV, LALGYFPYFANWHMAAFLVGT, LYMLVTLVLATLSRFQLVALA, AFAILASVLISVLLLILCLAM, and FSHLVSFLHAPGWFTIIAILI. Active-site charge relay system; for serine protease activity residues include histidine 477, aspartate 506, and serine 569. An O-(5'-phospho-RNA)-tyrosine modification is found at tyrosine 694. Positions 703 to 732 form a coiled coil; that stretch reads TRDQLREMAEAAREADDDFDDYEEEKNEVD. The interval 856-879 is disordered; the sequence is MQRKKQKPKKREEGPERGPINPDE. The region spanning 1122–1254 is the RdRp catalytic domain; that stretch reads SVFIEFDWTR…TFDHVPPDYV (133 aa).

The protein belongs to the astroviridae polyprotein 1AB family. As to quaternary structure, monomer. Post-translationally, cleaved by the viral and host proteases. The protease is probably autocatalytically cleaved.

Its subcellular location is the host membrane. It catalyses the reaction RNA(n) + a ribonucleoside 5'-triphosphate = RNA(n+1) + diphosphate. Functionally, responsible for the cleavage of the polyprotein into functional products. In terms of biological role, protein covalently attached to the 5' extremity of the genomic and subgenomic RNAs. It may serve as a primer for the replicase. This chain is Non-structural polyprotein 1AB (ORF1), found in Neovison vison (American mink).